Consider the following 95-residue polypeptide: Suppressor of silencing 2b (95 aa).

The segment at 8 to 18 is homotetramerization; it reads LHEIIRKLERM. Positions 8–40 form a coiled coil; it reads LHEIIRKLERMNQKKQAQRKRHKLNRKERGHKS. The segment at 16-49 is disordered; that stretch reads ERMNQKKQAQRKRHKLNRKERGHKSPSEQRRSEL. Over residues 23–37 the composition is skewed to basic residues; it reads QAQRKRHKLNRKERG. The Nuclear localization signal motif lies at 26–30; the sequence is RKRHK. Residues 38 to 49 are compositionally biased toward basic and acidic residues; it reads HKSPSEQRRSEL.

This sequence belongs to the cucumovirus/ilarvirus protein 2b family. As to quaternary structure, homodimer. Homotetramer (dimer of dimers).

It is found in the host nucleus. Functionally, acts as a suppressor of RNA-mediated gene silencing, also known as post-transcriptional gene silencing (PTGS), a mechanism of plant viral defense that limits the accumulation of viral RNAs. Forms a homodimer to measure siRNA duplex in a length-preference mode. Binds to both siRNA duplexes (19bp) and long siRNA duplexes (30bp). This Canna (Florist's daisy) protein is Suppressor of silencing 2b.